The primary structure comprises 465 residues: Sperm microtubule associated protein 2-like (465 aa).

Polar residues predominate over residues 1–29 (MENQEFLSSSAPSEVTDGQVSTEISTCSE). Positions 1–140 (MENQEFLSSS…REAKETELLP (140 aa)) are disordered. Composition is skewed to basic and acidic residues over residues 40–70 (LDTH…QDQR) and 114–137 (KARE…KETE). THEG repeat units follow at residues 174-192 (RKCF…PKKQ), 214-233 (GALK…PKEV), 260-279 (PALF…PNGF), 297-316 (SLRI…AKGT), 333-352 (STLS…PRIK), 373-392 (AAMI…SKSV), 409-428 (ATTH…PNKR), and 446-465 (AALK…PLTR).

This is Sperm microtubule associated protein 2-like from Homo sapiens (Human).